Reading from the N-terminus, the 251-residue chain is Hydroxyacylglutathione hydrolase (251 aa).

Residues H53, H55, D57, H58, H110, D127, and H165 each coordinate Zn(2+).

Belongs to the metallo-beta-lactamase superfamily. Glyoxalase II family. Monomer. Requires Zn(2+) as cofactor.

The catalysed reaction is an S-(2-hydroxyacyl)glutathione + H2O = a 2-hydroxy carboxylate + glutathione + H(+). It functions in the pathway secondary metabolite metabolism; methylglyoxal degradation; (R)-lactate from methylglyoxal: step 2/2. Its function is as follows. Thiolesterase that catalyzes the hydrolysis of S-D-lactoyl-glutathione to form glutathione and D-lactic acid. The chain is Hydroxyacylglutathione hydrolase from Escherichia coli (strain UTI89 / UPEC).